We begin with the raw amino-acid sequence, 190 residues long: Acyl-acyl carrier protein thioesterase ATL3, chloroplastic (190 aa).

Residues 1 to 49 (MFLQVTGTATPAMPAVVFLNSWRRPLSIPLRSVKTFKPLAFFDLKGGKG) constitute a chloroplast transit peptide. Aspartate 66 is an active-site residue.

This sequence belongs to the 4-hydroxybenzoyl-CoA thioesterase family. Highly expressed in stems and flowers and at lower levels in rosette leaves, cauline leaves and siliques.

It is found in the plastid. Its subcellular location is the chloroplast. Functionally, acyl-ACP thioesterase involved in the production of fatty acids and beta-keto fatty acids. Can produce fatty acids of long chain (14:1 and 16:1) and beta-keto fatty acids of medium to long chain (8:0, 10:0, 12:0, 12:1, 14:0 and 16:0) when expressed in a heterologous organism (E.coli). Possesses thioesterase activity for lauroyl-ACP (12:0-ACP) in vitro. May play a role in the generation of long fatty acids in the chloroplast. The protein is Acyl-acyl carrier protein thioesterase ATL3, chloroplastic of Arabidopsis thaliana (Mouse-ear cress).